Here is a 1143-residue protein sequence, read N- to C-terminus: Disease resistance protein Pikm1-TS (1143 aa).

Positions 1–190 (MEAAAMAVTA…PLRIMGGEMQ (190 aa)) are structured coiled coil (CC) domain. One can recognise an HMA domain in the interval 189–258 (MQKIVFKIPM…KVGPAMFLEV (70 aa)). Residues 191–264 (KIVFKIPMVD…FLEVSQVKED (74 aa)) are HMA-like domain. The NB-ARC domain occupies 282–570 (HEVKTICILG…WIAEGFVSEE (289 aa)). 10 LRR repeats span residues 681–706 (FKRLRVLDLEDNKDIQDSHLQGICEQ), 708–731 (SLRVRYLGLKGTRIRKLPQEMRKL), 732–754 (KHLEILYVGSTRISELPQEIGEL), 756–777 (HLRILDVRNTDITELPLQIREL), 778–800 (QHLHTLDVRNTPISELPPQVGKL), 802–823 (NLKIMCVRSTGVRELPKEIGEL), 824–848 (NHLQTLDVRNTRVRELPWQAGQISQ), 945–968 (MPNLQTLVLRFEALPRQPITINGT), 979–1002 (DSRVPRIAFHEDAMPNLKLLEFKF), and 1004–1027 (AGPASNDAIGITNLKSLQKVVFRC).

This sequence belongs to the disease resistance NB-LRR family. Interacts with AVR-Pik through its N-terminal part containing the HMA-like domain. In terms of tissue distribution, constitutively expressed.

Its function is as follows. Disease resistance (R) protein that specifically recognizes the AVR-Pik effector avirulence protein from M.oryzae. Resistance proteins guard the plant against pathogens that contain an appropriate avirulence protein via an indirect interaction with this avirulence protein. That triggers a defense system including the hypersensitive response, which restricts the pathogen growth. Contribution of Pikm-2 is required to recognize the effector avirulence protein AVR-Pik. This Oryza sativa subsp. japonica (Rice) protein is Disease resistance protein Pikm1-TS.